The following is a 152-amino-acid chain: Small ribosomal subunit protein uS15 (152 aa).

The span at 1 to 11 shows a compositional bias: basic residues; sequence MAKMHTKRKGK. A disordered region spans residues 1 to 23; it reads MAKMHTKRKGKSSSTRPIRTDPP.

It belongs to the universal ribosomal protein uS15 family. In terms of assembly, part of the 30S ribosomal subunit.

In Methanosarcina acetivorans (strain ATCC 35395 / DSM 2834 / JCM 12185 / C2A), this protein is Small ribosomal subunit protein uS15.